Reading from the N-terminus, the 273-residue chain is Torsin-1A (273 aa).

Residues 45-205 are interaction with SNAPIN; it reads KPKKPLTLSL…VSVFNNKNSG (161 aa). Residue 56–63 participates in ATP binding; that stretch reads GWTGTGKN. N-linked (GlcNAc...) asparagine glycans are attached at residues Asn97 and Asn112.

The protein belongs to the ClpA/ClpB family. Torsin subfamily. As to quaternary structure, homohexamer. Interacts with TOR1B; the interaction may be specific of neural tissues. Interacts (ATP-bound) with TOR1AIP1 and TOR1AIP2; the interactions induce ATPase activity. Interacts with KLHL14; preferentially when ATP-free. Interacts with KLC1 (via TPR repeats); the interaction associates TOR1A with the kinesin oligomeric complex. Interacts with COPS4; the interaction associates TOR1A with the CSN complex. Interacts with SNAPIN; the interaction is direct and associates SNAPIN with the CSN complex. Interacts with STON2. Interacts (ATP-bound) with SYNE3 (via KASH domain); the interaction is required for SYNE3 nuclear envelope localization. Interacts with VIM; the interaction associates TOR1A with the cytoskeleton. Interacts with PLEC. Interacts (ATP-bound) with SLC6A3; regulates SLC6A3 transport to the plasma membrane. Post-translationally, N-glycosylated.

The protein resides in the endoplasmic reticulum lumen. It is found in the nucleus membrane. Its subcellular location is the cell projection. The protein localises to the growth cone. It localises to the cytoplasmic vesicle membrane. The protein resides in the synapse. It is found in the synaptosome. Its subcellular location is the cytoplasm. The protein localises to the cytoskeleton. The catalysed reaction is ATP + H2O = ADP + phosphate + H(+). Protein with chaperone functions important for the control of protein folding, processing, stability and localization as well as for the reduction of misfolded protein aggregates. Involved in the regulation of synaptic vesicle recycling, controls STON2 protein stability in collaboration with the COP9 signalosome complex (CSN). In the nucleus, may link the cytoskeleton with the nuclear envelope, this mechanism seems to be crucial for the control of nuclear polarity, cell movement and, specifically in neurons, nuclear envelope integrity. Participates in the cellular trafficking and may regulate the subcellular location of multipass membrane proteins such as the dopamine transporter SLC6A3, leading to the modulation of dopamine neurotransmission. In the endoplasmic reticulum, plays a role in the quality control of protein folding by increasing clearance of misfolded proteins such as SGCE variants or holding them in an intermediate state for proper refolding. May have a redundant function with TOR1B in non-neural tissues. In Cricetus cricetus (Black-bellied hamster), this protein is Torsin-1A (TOR1A).